We begin with the raw amino-acid sequence, 325 residues long: Lipoyl synthase (325 aa).

The segment at 1–31 (MANLIDNTARSAASDARAARHPEKQKRADTP) is disordered. Residues 17 to 31 (RAARHPEKQKRADTP) show a composition bias toward basic and acidic residues. [4Fe-4S] cluster contacts are provided by C65, C70, C76, C91, C95, C98, and S304. The region spanning 77-293 (WEQKHATFMI…ETIARAKGFL (217 aa)) is the Radical SAM core domain.

This sequence belongs to the radical SAM superfamily. Lipoyl synthase family. The cofactor is [4Fe-4S] cluster.

The protein resides in the cytoplasm. The catalysed reaction is [[Fe-S] cluster scaffold protein carrying a second [4Fe-4S](2+) cluster] + N(6)-octanoyl-L-lysyl-[protein] + 2 oxidized [2Fe-2S]-[ferredoxin] + 2 S-adenosyl-L-methionine + 4 H(+) = [[Fe-S] cluster scaffold protein] + N(6)-[(R)-dihydrolipoyl]-L-lysyl-[protein] + 4 Fe(3+) + 2 hydrogen sulfide + 2 5'-deoxyadenosine + 2 L-methionine + 2 reduced [2Fe-2S]-[ferredoxin]. Its pathway is protein modification; protein lipoylation via endogenous pathway; protein N(6)-(lipoyl)lysine from octanoyl-[acyl-carrier-protein]: step 2/2. Its function is as follows. Catalyzes the radical-mediated insertion of two sulfur atoms into the C-6 and C-8 positions of the octanoyl moiety bound to the lipoyl domains of lipoate-dependent enzymes, thereby converting the octanoylated domains into lipoylated derivatives. The protein is Lipoyl synthase of Maricaulis maris (strain MCS10) (Caulobacter maris).